A 40-amino-acid chain; its full sequence is Photosystem II reaction center protein J (40 aa).

The helical transmembrane segment at Ile-8–Phe-28 threads the bilayer.

The protein belongs to the PsbJ family. In terms of assembly, PSII is composed of 1 copy each of membrane proteins PsbA, PsbB, PsbC, PsbD, PsbE, PsbF, PsbH, PsbI, PsbJ, PsbK, PsbL, PsbM, PsbT, PsbX, PsbY, PsbZ, Psb30/Ycf12, at least 3 peripheral proteins of the oxygen-evolving complex and a large number of cofactors. It forms dimeric complexes.

It localises to the plastid. Its subcellular location is the chloroplast thylakoid membrane. In terms of biological role, one of the components of the core complex of photosystem II (PSII). PSII is a light-driven water:plastoquinone oxidoreductase that uses light energy to abstract electrons from H(2)O, generating O(2) and a proton gradient subsequently used for ATP formation. It consists of a core antenna complex that captures photons, and an electron transfer chain that converts photonic excitation into a charge separation. The protein is Photosystem II reaction center protein J of Pelargonium hortorum (Common geranium).